Reading from the N-terminus, the 603-residue chain is Geraniol synthase Tps-5073G30, chloroplastic (603 aa).

A chloroplast-targeting transit peptide spans Met1–Ser35. Arg319, Asp356, Asp360, Arg497, and Asp500 together coordinate (2E)-geranyl diphosphate. 2 residues coordinate Mg(2+): Asp356 and Asp360. The short motif at Asp356–Asp360 is the DDXXD motif element. Mg(2+)-binding residues include Asp500, Thr504, and Glu508.

It belongs to the terpene synthase family. Tpsb subfamily. As to quaternary structure, monomer. Mg(2+) is required as a cofactor. It depends on Mn(2+) as a cofactor.

Its subcellular location is the plastid. It localises to the chloroplast. It carries out the reaction (2E)-geranyl diphosphate + H2O = (2E)-geraniol + diphosphate. Its pathway is secondary metabolite biosynthesis; terpenoid biosynthesis. In terms of biological role, monoterpene synthase (mono-TPS) involved in the biosynthesis of monoterpenes natural products. Catalyzes the conversion of (2E)-geranyl diphosphate (GPP) into geraniol. This chain is Geraniol synthase Tps-5073G30, chloroplastic, found in Perilla frutescens (Beefsteak mint).